The chain runs to 699 residues: Polyribonucleotide nucleotidyltransferase (699 aa).

Residues aspartate 485 and aspartate 491 each coordinate Mg(2+). The region spanning 552-611 (PRITTIKINPEKIRDVIGKGGAVIRALTEETGTTIELEDDGTVKIASSNGEATKEAIRRI) is the KH domain. An S1 motif domain is found at 621 to 689 (GRIYNGKVIR…RQGRVRLSIK (69 aa)).

The protein belongs to the polyribonucleotide nucleotidyltransferase family. Component of the RNA degradosome, which is a multiprotein complex involved in RNA processing and mRNA degradation. Mg(2+) is required as a cofactor.

Its subcellular location is the cytoplasm. It catalyses the reaction RNA(n+1) + phosphate = RNA(n) + a ribonucleoside 5'-diphosphate. Functionally, involved in mRNA degradation. Catalyzes the phosphorolysis of single-stranded polyribonucleotides processively in the 3'- to 5'-direction. The chain is Polyribonucleotide nucleotidyltransferase from Shewanella sp. (strain MR-4).